A 303-amino-acid polypeptide reads, in one-letter code: Energy-coupling factor transporter ATP-binding protein EcfA2 (303 aa).

One can recognise an ABC transporter domain in the interval 17–260 (LSVSNLSCFF…EAFLAHTTII (244 aa)). 54–61 (GDSGSGKS) serves as a coordination point for ATP.

Belongs to the ABC transporter superfamily. Energy-coupling factor EcfA family. In terms of assembly, forms a stable energy-coupling factor (ECF) transporter complex composed of 2 membrane-embedded substrate-binding proteins (S component), 2 ATP-binding proteins (A component) and 2 transmembrane proteins (T component).

Its subcellular location is the cell membrane. ATP-binding (A) component of a common energy-coupling factor (ECF) ABC-transporter complex. Unlike classic ABC transporters this ECF transporter provides the energy necessary to transport a number of different substrates. In Mycoplasma pneumoniae (strain ATCC 29342 / M129 / Subtype 1) (Mycoplasmoides pneumoniae), this protein is Energy-coupling factor transporter ATP-binding protein EcfA2.